Reading from the N-terminus, the 636-residue chain is DNA mismatch repair protein MutL (636 aa).

The segment at R362–E393 is disordered. Basic and acidic residues predominate over residues K363–E393.

It belongs to the DNA mismatch repair MutL/HexB family.

In terms of biological role, this protein is involved in the repair of mismatches in DNA. It is required for dam-dependent methyl-directed DNA mismatch repair. May act as a 'molecular matchmaker', a protein that promotes the formation of a stable complex between two or more DNA-binding proteins in an ATP-dependent manner without itself being part of a final effector complex. The protein is DNA mismatch repair protein MutL of Lactobacillus helveticus (strain DPC 4571).